A 95-amino-acid polypeptide reads, in one-letter code: Envelope glycoprotein N (95 aa).

A signal peptide spans 1–26; that stretch reads MGLMDIHNAVCSLVIGVAILIATSQA. Topologically, residues 27 to 55 are virion surface; the sequence is TFVDWGSSITSMGDFWESTCSAVGVSIAF. A helical membrane pass occupies residues 56-76; the sequence is SSGFSVLFYMGLVAVISALLA. The Intravirion segment spans residues 77–95; sequence GSYHACFRLFTADMFKEEW.

It belongs to the herpesviridae glycoprotein N family. As to quaternary structure, interacts (via N-terminus) with gM (via N-terminus). The gM-gN heterodimer forms the gCII complex.

It is found in the virion membrane. The protein resides in the host membrane. The protein localises to the host Golgi apparatus. It localises to the host trans-Golgi network. Envelope glycoprotein necessary for proper maturation of gM and modulation of its membrane fusion activity. Also plays a critical role in virion morphogenesis. This Gallus gallus (Chicken) protein is Envelope glycoprotein N.